We begin with the raw amino-acid sequence, 355 residues long: D-alanine--D-alanine ligase (355 aa).

The region spanning 143-350 is the ATP-grasp domain; that stretch reads KTIFSNLKIP…IEQLVAKLVD (208 aa). 178–233 contacts ATP; that stretch reads IKKLNFPVFVKPSNSGSSLGISKVINKSALLKALEKAWEIDARILVEEGLETREIE. The Mg(2+) site is built by Asp-303, Glu-317, and Asn-319.

This sequence belongs to the D-alanine--D-alanine ligase family. It depends on Mg(2+) as a cofactor. The cofactor is Mn(2+).

It localises to the cytoplasm. The enzyme catalyses 2 D-alanine + ATP = D-alanyl-D-alanine + ADP + phosphate + H(+). Its pathway is cell wall biogenesis; peptidoglycan biosynthesis. Functionally, cell wall formation. The sequence is that of D-alanine--D-alanine ligase from Prochlorococcus marinus (strain MIT 9312).